The chain runs to 176 residues: MSRVAKAPVAIPAGVEVTLNEQTITVKGTKGSLTRVINTDVIVVVEDNEIKCSSVEGVKTNAQAGTARALINNMVVGVTEGFEKKLQLIGVGYRAKIAGNGVDLTLGFSHPLVHELPDGVSAVCPSQTEIVLTGTDKQLVGQVAAEIRGYRPPEPYKGKGVRYADEQVRRKEAKKK.

The span at 156-170 (YKGKGVRYADEQVRR) shows a compositional bias: basic and acidic residues. The disordered stretch occupies residues 156–176 (YKGKGVRYADEQVRRKEAKKK).

Belongs to the universal ribosomal protein uL6 family. Part of the 50S ribosomal subunit.

In terms of biological role, this protein binds to the 23S rRNA, and is important in its secondary structure. It is located near the subunit interface in the base of the L7/L12 stalk, and near the tRNA binding site of the peptidyltransferase center. The sequence is that of Large ribosomal subunit protein uL6 from Shewanella woodyi (strain ATCC 51908 / MS32).